We begin with the raw amino-acid sequence, 240 residues long: Proteasome subunit alpha (240 aa).

Belongs to the peptidase T1A family. As to quaternary structure, the 20S proteasome core is composed of 14 alpha and 14 beta subunits that assemble into four stacked heptameric rings, resulting in a barrel-shaped structure. The two inner rings, each composed of seven catalytic beta subunits, are sandwiched by two outer rings, each composed of seven alpha subunits. The catalytic chamber with the active sites is on the inside of the barrel. Has a gated structure, the ends of the cylinder being occluded by the N-termini of the alpha-subunits. Is capped at one or both ends by the proteasome regulatory ATPase, PAN.

Its subcellular location is the cytoplasm. With respect to regulation, the formation of the proteasomal ATPase PAN-20S proteasome complex, via the docking of the C-termini of PAN into the intersubunit pockets in the alpha-rings, triggers opening of the gate for substrate entry. Interconversion between the open-gate and close-gate conformations leads to a dynamic regulation of the 20S proteasome proteolysis activity. Functionally, component of the proteasome core, a large protease complex with broad specificity involved in protein degradation. The protein is Proteasome subunit alpha of Methanoculleus marisnigri (strain ATCC 35101 / DSM 1498 / JR1).